The following is a 571-amino-acid chain: Proline--tRNA ligase (571 aa).

The protein belongs to the class-II aminoacyl-tRNA synthetase family. ProS type 1 subfamily. In terms of assembly, homodimer.

It localises to the cytoplasm. It catalyses the reaction tRNA(Pro) + L-proline + ATP = L-prolyl-tRNA(Pro) + AMP + diphosphate. Catalyzes the attachment of proline to tRNA(Pro) in a two-step reaction: proline is first activated by ATP to form Pro-AMP and then transferred to the acceptor end of tRNA(Pro). As ProRS can inadvertently accommodate and process non-cognate amino acids such as alanine and cysteine, to avoid such errors it has two additional distinct editing activities against alanine. One activity is designated as 'pretransfer' editing and involves the tRNA(Pro)-independent hydrolysis of activated Ala-AMP. The other activity is designated 'posttransfer' editing and involves deacylation of mischarged Ala-tRNA(Pro). The misacylated Cys-tRNA(Pro) is not edited by ProRS. This Vibrio campbellii (strain ATCC BAA-1116) protein is Proline--tRNA ligase.